The sequence spans 310 residues: Prostate androgen-regulated mucin-like protein 1 homolog (310 aa).

Residues 1-20 form the signal peptide; the sequence is MVYKTLFALCILTAGWRVQS. The Extracellular segment spans residues 21–258; that stretch reads LPTSAPLSVS…EVEHALSSGS (238 aa). The span at 40-74 shows a compositional bias: polar residues; the sequence is TIWTSSPQNTDADTASPSNGTHNNSVLPVTASAPT. A disordered region spans residues 40–224; it reads TIWTSSPQNT…VPQEKTPPTT (185 aa). Residues Asn-58, Asn-62, and Asn-80 are each glycosylated (N-linked (GlcNAc...) asparagine). Over residues 92–103 the composition is skewed to polar residues; that stretch reads SPGSNWEGTNTD. Low complexity predominate over residues 150-209; the sequence is SPQAPASSPSSLSTSPPEVFSVSVTTNHSSTVTSTQPTGAPTAPESPTEESSSDHTPTSH. A glycan (N-linked (GlcNAc...) asparagine) is linked at Asn-176. The chain crosses the membrane as a helical span at residues 259–279; sequence IAAITVTVIAVVLLVFGVAAY. Residues 280-310 lie on the Cytoplasmic side of the membrane; the sequence is LKIRHSSYGRLLDDHDYGSWGNYNNPLYDDS. Residue Ser-298 is modified to Phosphoserine.

The protein belongs to the PARM family. Post-translationally, highly N-glycosylated and O-glycosylated.

It is found in the cell membrane. It localises to the golgi apparatus membrane. Its subcellular location is the endosome membrane. Functionally, may regulate TLP1 expression and telomerase activity, thus enabling certain prostatic cells to resist apoptosis. The chain is Prostate androgen-regulated mucin-like protein 1 homolog (PARM1) from Pongo abelii (Sumatran orangutan).